A 294-amino-acid chain; its full sequence is Osteopontin (294 aa).

The first 16 residues, Met-1–Ser-16, serve as a signal peptide directing secretion. Residues Ser-24, Ser-26, Ser-27, Ser-61, Ser-62, Ser-75, Ser-77, Ser-80, Ser-106, Ser-109, Ser-112, Ser-115, and Ser-118 each carry the phosphoserine modification. The disordered stretch occupies residues Trp-42–Asp-274. Residues Ser-48–Ser-61 are compositionally biased toward polar residues. Acidic residues predominate over residues Asp-85–Asp-110. Residues Thr-121 to Thr-130 are compositionally biased toward polar residues. Residues Thr-123, Thr-132, and Thr-137 are each glycosylated (O-linked (GalNAc...) threonine). Positions Arg-144–Asp-146 match the Cell attachment site motif. Residues Thr-170 and Thr-175 each carry the phosphothreonine modification. The segment covering Leu-174–Leu-187 has biased composition (basic and acidic residues). 6 positions are modified to phosphoserine: Ser-176, Ser-180, Ser-200, Ser-209, Ser-213, and Ser-219. The segment covering Ser-197–Asp-216 has biased composition (polar residues). Residue Ser-219 is glycosylated (O-linked (Xyl...) (chondroitin sulfate) serine). Residues Leu-220 to Gln-232 are compositionally biased toward basic and acidic residues. Thr-222 carries the post-translational modification Phosphothreonine. Phosphoserine occurs at positions 228, 231, 234, 238, 243, 247, 250, 255, 260, 271, 283, 288, 290, and 291. Positions Ser-234–Ala-249 are enriched in polar residues. Positions Asp-263–Asp-274 are enriched in basic and acidic residues. Ser-288 carries O-linked (Xyl...) (chondroitin sulfate) serine glycosylation.

The protein belongs to the osteopontin family. Interacts (via N-terminus) with integrin ITGA9:ITGB1. In terms of processing, extensively phosphorylated by FAM20C in the extracellular medium at multiple sites within the S-x-E/pS motif. The phosphorylated form inhibits hydroxyapatite crystallization. Dephosphorylation via a mechanism involving ALPL/TNAP promotes hydroxyapatite crystallization. O-glycosylated. Post-translationally, forms covalent cross-links mediated by transglutaminase TGM2, between a glutamine and the epsilon-amino group of a lysine residue, forming homopolymers and heteropolymers, increasing its collagen binding properties.

It localises to the secreted. In terms of biological role, major non-collagenous bone protein that binds tightly to hydroxyapatite. Appears to form an integral part of the mineralized matrix. Probably important to cell-matrix interaction. Functionally, acts as a cytokine involved in enhancing production of interferon-gamma and interleukin-12 and reducing production of interleukin-10 and is essential in the pathway that leads to type I immunity. This is Osteopontin (Spp1) from Mus musculus (Mouse).